We begin with the raw amino-acid sequence, 98 residues long: Integration host factor subunit beta (98 aa).

The protein belongs to the bacterial histone-like protein family. In terms of assembly, heterodimer of an alpha and a beta chain.

Functionally, this protein is one of the two subunits of integration host factor, a specific DNA-binding protein that functions in genetic recombination as well as in transcriptional and translational control. This is Integration host factor subunit beta from Pseudomonas fluorescens (strain Pf0-1).